An 86-amino-acid chain; its full sequence is Small ribosomal subunit protein bS16 (86 aa).

Belongs to the bacterial ribosomal protein bS16 family.

The protein is Small ribosomal subunit protein bS16 of Bordetella bronchiseptica (strain ATCC BAA-588 / NCTC 13252 / RB50) (Alcaligenes bronchisepticus).